The primary structure comprises 155 residues: MKIIEGGLAAPQAQIAIVISRFNSFINEQLLAGAIDTLKRTGQVADDNITVVRVPGAVELPLVAKRVAASKKFDAIIALGTVIRGGTPHFEFVAGECNKGLGQVSMDFDIPVSFGVLTTDSIEQAIERAGTKMGNKGSEAALSALEMVNVMAEFK.

5-amino-6-(D-ribitylamino)uracil contacts are provided by residues F22, 57–59 (AVE), and 81–83 (TVI). 86–87 (GT) contacts (2S)-2-hydroxy-3-oxobutyl phosphate. H89 functions as the Proton donor in the catalytic mechanism. Position 114 (F114) interacts with 5-amino-6-(D-ribitylamino)uracil. Position 128 (R128) interacts with (2S)-2-hydroxy-3-oxobutyl phosphate.

The protein belongs to the DMRL synthase family. As to quaternary structure, forms an icosahedral capsid composed of 60 subunits, arranged as a dodecamer of pentamers.

It carries out the reaction (2S)-2-hydroxy-3-oxobutyl phosphate + 5-amino-6-(D-ribitylamino)uracil = 6,7-dimethyl-8-(1-D-ribityl)lumazine + phosphate + 2 H2O + H(+). It participates in cofactor biosynthesis; riboflavin biosynthesis; riboflavin from 2-hydroxy-3-oxobutyl phosphate and 5-amino-6-(D-ribitylamino)uracil: step 1/2. Its function is as follows. Catalyzes the formation of 6,7-dimethyl-8-ribityllumazine by condensation of 5-amino-6-(D-ribitylamino)uracil with 3,4-dihydroxy-2-butanone 4-phosphate. This is the penultimate step in the biosynthesis of riboflavin. The protein is 6,7-dimethyl-8-ribityllumazine synthase of Psychromonas ingrahamii (strain DSM 17664 / CCUG 51855 / 37).